The following is a 683-amino-acid chain: DNA-directed RNA polymerase subunit beta' (683 aa).

Residues cysteine 69, cysteine 71, cysteine 87, and cysteine 90 each contribute to the Zn(2+) site. Mg(2+) is bound by residues aspartate 489, aspartate 491, and aspartate 493.

It belongs to the RNA polymerase beta' chain family. RpoC1 subfamily. In plastids the minimal PEP RNA polymerase catalytic core is composed of four subunits: alpha, beta, beta', and beta''. When a (nuclear-encoded) sigma factor is associated with the core the holoenzyme is formed, which can initiate transcription. Mg(2+) serves as cofactor. Requires Zn(2+) as cofactor.

The protein localises to the plastid. The protein resides in the chloroplast. The enzyme catalyses RNA(n) + a ribonucleoside 5'-triphosphate = RNA(n+1) + diphosphate. Functionally, DNA-dependent RNA polymerase catalyzes the transcription of DNA into RNA using the four ribonucleoside triphosphates as substrates. The chain is DNA-directed RNA polymerase subunit beta' from Zea mays (Maize).